The primary structure comprises 134 residues: Profilin-4 (134 aa).

Cysteines 13 and 118 form a disulfide. Positions 84–100 (AVIRGKKGSGGITIKKT) match the Involved in PIP2 interaction motif. The residue at position 114 (Thr-114) is a Phosphothreonine.

It belongs to the profilin family. As to quaternary structure, occurs in many kinds of cells as a complex with monomeric actin in a 1:1 ratio. Post-translationally, phosphorylated by MAP kinases.

It is found in the cytoplasm. The protein resides in the cytoskeleton. In terms of biological role, binds to actin and affects the structure of the cytoskeleton. At high concentrations, profilin prevents the polymerization of actin, whereas it enhances it at low concentrations. The sequence is that of Profilin-4 from Olea europaea (Common olive).